A 513-amino-acid chain; its full sequence is Pleiotropic regulator 1 (513 aa).

Residue M1 is modified to N-acetylmethionine. Phosphoserine occurs at positions 119 and 200. 7 WD repeats span residues 201–240 (GHLG…LKLS), 243–282 (GHIS…VIRH), 285–324 (GHLS…SVHT), 327–366 (GHTN…TRVT), 369–409 (NHKK…QNLS), 410–448 (GHNA…NFQR), and 459–498 (DSES…TEET). Phosphoserine is present on S390.

Belongs to the WD repeat PRL1/PRL2 family. As to quaternary structure, identified in the spliceosome C complex. Component of the PRP19-CDC5L splicing complex composed of a core complex comprising a homotetramer of PRPF19, CDC5L, PLRG1 and BCAS2, and at least three less stably associated proteins CTNNBL1, CWC15 and HSPA8. Interacts (via its WD40 repeat domain) directly with CDC5L (via its C-terminal); the interaction is required for mRNA splicing but not for spliceosome assembly. Component of the minor spliceosome, which splices U12-type introns. Within this complex, interacts with CRIPT. Also interacts directly in the complex with BCAS2 and PRPF19. Interacts with USB1.

The protein localises to the nucleus. It localises to the nucleus speckle. Involved in pre-mRNA splicing as component of the spliceosome. Component of the PRP19-CDC5L complex that forms an integral part of the spliceosome and is required for activating pre-mRNA splicing. As a component of the minor spliceosome, involved in the splicing of U12-type introns in pre-mRNAs. This Bos taurus (Bovine) protein is Pleiotropic regulator 1 (PLRG1).